Consider the following 199-residue polypeptide: uncharacterized protein (199 aa).

Residues Phe7–Ile27 traverse the membrane as a helical segment.

This sequence belongs to the band 7/mec-2 family.

The protein resides in the membrane. This is an uncharacterized protein from Methanocaldococcus jannaschii (strain ATCC 43067 / DSM 2661 / JAL-1 / JCM 10045 / NBRC 100440) (Methanococcus jannaschii).